Consider the following 327-residue polypeptide: tRNA uridine(34) hydroxylase (327 aa).

Residues 122–218 (QENRCLVLDV…YGLKMGTGKW (97 aa)) enclose the Rhodanese domain. Cys-178 functions as the Cysteine persulfide intermediate in the catalytic mechanism.

It belongs to the TrhO family.

It carries out the reaction uridine(34) in tRNA + AH2 + O2 = 5-hydroxyuridine(34) in tRNA + A + H2O. Catalyzes oxygen-dependent 5-hydroxyuridine (ho5U) modification at position 34 in tRNAs. This is tRNA uridine(34) hydroxylase from Chlamydia trachomatis serovar L2 (strain ATCC VR-902B / DSM 19102 / 434/Bu).